A 376-amino-acid polypeptide reads, in one-letter code: TelA-like protein SE_1089 (376 aa).

This sequence belongs to the TelA family.

The protein is TelA-like protein SE_1089 of Staphylococcus epidermidis (strain ATCC 12228 / FDA PCI 1200).